The chain runs to 560 residues: Nuclear hormone receptor family member nhr-8 (560 aa).

The interval Met-1–Pro-21 is disordered. A DNA-binding region (nuclear receptor) is located at residues Gly-23–Asp-98. NR C4-type zinc fingers lie at residues Cys-26 to Cys-46 and Cys-62 to Cys-86. The region spanning Asp-336–Glu-560 is the NR LBD domain.

Belongs to the nuclear hormone receptor family.

Its subcellular location is the nucleus. Functionally, orphan nuclear receptor. In Caenorhabditis elegans, this protein is Nuclear hormone receptor family member nhr-8 (nhr-8).